The following is a 406-amino-acid chain: uncharacterized protein (406 aa).

Residues 1–36 form a disordered region; it reads MDRVRSLIGNRRGRRHNRQHPPYPHSGSPSTVNLLG.

This sequence to yeast YMR316w.

This is an uncharacterized protein from Saccharomyces cerevisiae (strain ATCC 204508 / S288c) (Baker's yeast).